Consider the following 470-residue polypeptide: Sulfate adenylyltransferase subunit 1 (470 aa).

Residues Lys-22–Glu-237 form the tr-type G domain. A G1 region spans residues Gly-31 to Ser-38. Gly-31 to Ser-38 provides a ligand contact to GTP. A G2 region spans residues Gly-89–Asp-93. The interval Asp-110–Gly-113 is G3. Residues Asp-110–His-114 and Asn-165–Asp-168 each bind GTP. The interval Asn-165–Asp-168 is G4. The interval Ser-202 to Lys-204 is G5.

The protein belongs to the TRAFAC class translation factor GTPase superfamily. Classic translation factor GTPase family. CysN/NodQ subfamily. In terms of assembly, heterodimer composed of CysD, the smaller subunit, and CysN.

The catalysed reaction is sulfate + ATP + H(+) = adenosine 5'-phosphosulfate + diphosphate. Its pathway is sulfur metabolism; hydrogen sulfide biosynthesis; sulfite from sulfate: step 1/3. Functionally, with CysD forms the ATP sulfurylase (ATPS) that catalyzes the adenylation of sulfate producing adenosine 5'-phosphosulfate (APS) and diphosphate, the first enzymatic step in sulfur assimilation pathway. APS synthesis involves the formation of a high-energy phosphoric-sulfuric acid anhydride bond driven by GTP hydrolysis by CysN coupled to ATP hydrolysis by CysD. In Methylorubrum populi (strain ATCC BAA-705 / NCIMB 13946 / BJ001) (Methylobacterium populi), this protein is Sulfate adenylyltransferase subunit 1.